Reading from the N-terminus, the 128-residue chain is uncharacterized protein (128 aa).

A run of 2 helical transmembrane segments spans residues 45 to 65 and 95 to 115; these read GYFH…LFPF and FMSH…LSCF.

The protein localises to the membrane. This is an uncharacterized protein from Saccharomyces cerevisiae (strain ATCC 204508 / S288c) (Baker's yeast).